A 177-amino-acid polypeptide reads, in one-letter code: Translation initiation factor IF-3 (177 aa).

Belongs to the IF-3 family. Monomer.

It localises to the cytoplasm. IF-3 binds to the 30S ribosomal subunit and shifts the equilibrium between 70S ribosomes and their 50S and 30S subunits in favor of the free subunits, thus enhancing the availability of 30S subunits on which protein synthesis initiation begins. The protein is Translation initiation factor IF-3 of Synechocystis sp. (strain ATCC 27184 / PCC 6803 / Kazusa).